The primary structure comprises 66 residues: Phylloseptin-H5 (66 aa).

A signal peptide spans 1–22; sequence MAFLKKSLFLVLFLGLVSLSIC. Positions 23 to 44 are excised as a propeptide; sequence EEEKRETEEEENEQEDDDKSEE. A disordered region spans residues 24-44; that stretch reads EEKRETEEEENEQEDDDKSEE. The segment covering 30–41 has biased composition (acidic residues); it reads EEEENEQEDDDK. Phe65 bears the Phenylalanine amide mark.

As to expression, expressed by the skin glands.

Its subcellular location is the secreted. Functionally, has antibacterial activity against the Gram-negative bacteria E.coli and P.aeruginosa, and the Gram-positive bacterium S.aureus. No hemolytic activity. The sequence is that of Phylloseptin-H5 (psn7) from Pithecopus hypochondrialis (Orange-legged leaf frog).